A 284-amino-acid chain; its full sequence is Pantothenate synthetase (284 aa).

Residue 32–39 participates in ATP binding; the sequence is MGALHEGH. The active-site Proton donor is H39. Position 63 (Q63) interacts with (R)-pantoate. Q63 is a binding site for beta-alanine. 149 to 152 contributes to the ATP binding site; that stretch reads GEKD. Q155 lines the (R)-pantoate pocket. Residues V178 and 186 to 189 each bind ATP; that span reads LSSR.

It belongs to the pantothenate synthetase family. As to quaternary structure, homodimer.

It localises to the cytoplasm. The catalysed reaction is (R)-pantoate + beta-alanine + ATP = (R)-pantothenate + AMP + diphosphate + H(+). It participates in cofactor biosynthesis; (R)-pantothenate biosynthesis; (R)-pantothenate from (R)-pantoate and beta-alanine: step 1/1. Its function is as follows. Catalyzes the condensation of pantoate with beta-alanine in an ATP-dependent reaction via a pantoyl-adenylate intermediate. The protein is Pantothenate synthetase of Chelativorans sp. (strain BNC1).